The primary structure comprises 159 residues: Ribosome maturation factor RimP (159 aa).

Belongs to the RimP family.

The protein localises to the cytoplasm. In terms of biological role, required for maturation of 30S ribosomal subunits. The chain is Ribosome maturation factor RimP from Trichlorobacter lovleyi (strain ATCC BAA-1151 / DSM 17278 / SZ) (Geobacter lovleyi).